The sequence spans 1137 residues: Eukaryotic translation initiation factor 3 subunit A (1137 aa).

The 183-residue stretch at 319–501 folds into the PCI domain; the sequence is LQRMAAHVLL…NSIYFGTDLT (183 aa). 2 stretches are compositionally biased toward basic and acidic residues: residues 588 to 623 and 829 to 899; these read QNNA…EERE and AAEE…RGGD. 2 disordered regions span residues 588-631 and 829-1137; these read QNNA…QNEI and AAEE…VKRR. Residue serine 908 is modified to Phosphoserine. Composition is skewed to basic and acidic residues over residues 922-971, 985-1046, 1054-1083, and 1106-1127; these read RGIE…EPDS, SRDE…EPQR, DAPR…RGDQ, and AREE…KAAD.

This sequence belongs to the eIF-3 subunit A family. Component of the eukaryotic translation initiation factor 3 (eIF-3) complex. The eIF-3 complex interacts with pix.

The protein localises to the cytoplasm. Its function is as follows. RNA-binding component of the eukaryotic translation initiation factor 3 (eIF-3) complex, which is involved in protein synthesis of a specialized repertoire of mRNAs and, together with other initiation factors, stimulates binding of mRNA and methionyl-tRNAi to the 40S ribosome. The eIF-3 complex specifically targets and initiates translation of a subset of mRNAs involved in cell proliferation. This is Eukaryotic translation initiation factor 3 subunit A from Drosophila yakuba (Fruit fly).